A 134-amino-acid polypeptide reads, in one-letter code: ATP synthase epsilon chain (134 aa).

It belongs to the ATPase epsilon chain family. In terms of assembly, F-type ATPases have 2 components, CF(1) - the catalytic core - and CF(0) - the membrane proton channel. CF(1) has five subunits: alpha(3), beta(3), gamma(1), delta(1), epsilon(1). CF(0) has three main subunits: a, b and c.

The protein localises to the cell membrane. In terms of biological role, produces ATP from ADP in the presence of a proton gradient across the membrane. This is ATP synthase epsilon chain from Alkaliphilus oremlandii (strain OhILAs) (Clostridium oremlandii (strain OhILAs)).